A 164-amino-acid polypeptide reads, in one-letter code: 2-keto-3-deoxy-D-glycero-D-galacto-9-phosphonononic acid phosphatase (164 aa).

2 residues coordinate Mg(2+): aspartate 10 and aspartate 12. Residues threonine 34, 54–56 (TGE), 64–67 (RAEK), and lysine 80 contribute to the substrate site. Aspartate 103 is a binding site for Mg(2+). Asparagine 106 is a substrate binding site.

The protein belongs to the KdsC family. In terms of assembly, homotetramer. Mg(2+) is required as a cofactor.

The catalysed reaction is 3-deoxy-D-glycero-beta-D-galacto-non-2-ulopyranosonate 9-phosphate + H2O = 3-deoxy-D-glycero-beta-D-galacto-non-2-ulopyranosonate + phosphate. Involved in the biosynthesis of 2-keto-3-deoxy-D-glycero-D-galacto-nononic acid used in cell-wall polysaccharides. Catalyzes the hydrolysis of 2-keto-3-deoxy-D-glycero-D-galacto-9-phosphonononic acid (KDN-9-P) to yield 2-keto-3-deoxy-D-glycero-D-galacto-nononic acid (KDN). Also able to hydrolyze N-acetylneuraminate-9-phosphate (Neu5NAc-9-P), 2-keto-3-deoxy-D-manno-octulosonate-8-phosphate (KDO-8-P), phosphoenolpyruvate (PEP), gluconate 6-phosphate, tyrosine phosphate ester and glucose-6-P as substrate. The protein is 2-keto-3-deoxy-D-glycero-D-galacto-9-phosphonononic acid phosphatase of Bacteroides thetaiotaomicron (strain ATCC 29148 / DSM 2079 / JCM 5827 / CCUG 10774 / NCTC 10582 / VPI-5482 / E50).